An 88-amino-acid polypeptide reads, in one-letter code: Small ribosomal subunit protein uS17 (88 aa).

The protein belongs to the universal ribosomal protein uS17 family. Part of the 30S ribosomal subunit.

Its function is as follows. One of the primary rRNA binding proteins, it binds specifically to the 5'-end of 16S ribosomal RNA. This is Small ribosomal subunit protein uS17 from Saccharophagus degradans (strain 2-40 / ATCC 43961 / DSM 17024).